The primary structure comprises 86 residues: Large ribosomal subunit protein bL31B (86 aa).

This sequence belongs to the bacterial ribosomal protein bL31 family. Type B subfamily. As to quaternary structure, part of the 50S ribosomal subunit.

The sequence is that of Large ribosomal subunit protein bL31B from Salmonella agona (strain SL483).